A 546-amino-acid chain; its full sequence is Glutamate--tRNA ligase (546 aa).

The 'HIGH' region motif lies at 41 to 51 (PSPTGFQHIGG). A 'KMSKS' region motif is present at residues 293–297 (KLSKR). Lys296 lines the ATP pocket.

This sequence belongs to the class-I aminoacyl-tRNA synthetase family. Glutamate--tRNA ligase type 1 subfamily. Monomer.

The protein localises to the cytoplasm. The catalysed reaction is tRNA(Glu) + L-glutamate + ATP = L-glutamyl-tRNA(Glu) + AMP + diphosphate. Catalyzes the attachment of glutamate to tRNA(Glu) in a two-step reaction: glutamate is first activated by ATP to form Glu-AMP and then transferred to the acceptor end of tRNA(Glu). The chain is Glutamate--tRNA ligase from Clostridium perfringens (strain 13 / Type A).